The primary structure comprises 72 residues: Translation initiation factor IF-1 (72 aa).

The S1-like domain occupies 1–72 (MAKEETIQMQ…SRARITFRAK (72 aa)).

Belongs to the IF-1 family. Component of the 30S ribosomal translation pre-initiation complex which assembles on the 30S ribosome in the order IF-2 and IF-3, IF-1 and N-formylmethionyl-tRNA(fMet); mRNA recruitment can occur at any time during PIC assembly.

Its subcellular location is the cytoplasm. In terms of biological role, one of the essential components for the initiation of protein synthesis. Stabilizes the binding of IF-2 and IF-3 on the 30S subunit to which N-formylmethionyl-tRNA(fMet) subsequently binds. Helps modulate mRNA selection, yielding the 30S pre-initiation complex (PIC). Upon addition of the 50S ribosomal subunit IF-1, IF-2 and IF-3 are released leaving the mature 70S translation initiation complex. In Nitrosospira multiformis (strain ATCC 25196 / NCIMB 11849 / C 71), this protein is Translation initiation factor IF-1.